The following is a 958-amino-acid chain: Valine--tRNA ligase (958 aa).

Residues 45-55 (PNVTGSLHMGH) carry the 'HIGH' region motif. A 'KMSKS' region motif is present at residues 571-575 (KMSKS). Residue Lys574 participates in ATP binding. Residues 892-958 (AAERTRLDKE…EALERLKQAS (67 aa)) are a coiled coil.

This sequence belongs to the class-I aminoacyl-tRNA synthetase family. ValS type 1 subfamily. Monomer.

Its subcellular location is the cytoplasm. The enzyme catalyses tRNA(Val) + L-valine + ATP = L-valyl-tRNA(Val) + AMP + diphosphate. Catalyzes the attachment of valine to tRNA(Val). As ValRS can inadvertently accommodate and process structurally similar amino acids such as threonine, to avoid such errors, it has a 'posttransfer' editing activity that hydrolyzes mischarged Thr-tRNA(Val) in a tRNA-dependent manner. This is Valine--tRNA ligase from Bradyrhizobium diazoefficiens (strain JCM 10833 / BCRC 13528 / IAM 13628 / NBRC 14792 / USDA 110).